The sequence spans 310 residues: Cytochrome f (310 aa).

The N-terminal stretch at 1 to 23 (MRRLIPILLGSLVLSLSILVAPA) is a signal peptide. Positions 28, 48, 51, and 52 each coordinate heme. A helical transmembrane segment spans residues 277 to 297 (IYGLLAFFVAVSLAQILLVLK).

This sequence belongs to the cytochrome f family. As to quaternary structure, the 4 large subunits of the cytochrome b6-f complex are cytochrome b6, subunit IV (17 kDa polypeptide, PetD), cytochrome f and the Rieske protein, while the 4 small subunits are PetG, PetL, PetM and PetN. The complex functions as a dimer. Requires heme as cofactor.

It is found in the cellular thylakoid membrane. In terms of biological role, component of the cytochrome b6-f complex, which mediates electron transfer between photosystem II (PSII) and photosystem I (PSI), cyclic electron flow around PSI, and state transitions. The protein is Cytochrome f of Prochlorococcus marinus (strain MIT 9303).